A 49-amino-acid chain; its full sequence is Large ribosomal subunit protein bL33A (49 aa).

This sequence belongs to the bacterial ribosomal protein bL33 family.

This chain is Large ribosomal subunit protein bL33A, found in Streptococcus pneumoniae (strain Hungary19A-6).